We begin with the raw amino-acid sequence, 426 residues long: Serine hydroxymethyltransferase (426 aa).

Residues Leu122 and 126–128 (GHL) contribute to the (6S)-5,6,7,8-tetrahydrofolate site. At Lys231 the chain carries N6-(pyridoxal phosphate)lysine.

It belongs to the SHMT family. In terms of assembly, homodimer. It depends on pyridoxal 5'-phosphate as a cofactor.

The protein localises to the cytoplasm. The enzyme catalyses (6R)-5,10-methylene-5,6,7,8-tetrahydrofolate + glycine + H2O = (6S)-5,6,7,8-tetrahydrofolate + L-serine. The protein operates within one-carbon metabolism; tetrahydrofolate interconversion. It participates in amino-acid biosynthesis; glycine biosynthesis; glycine from L-serine: step 1/1. Catalyzes the reversible interconversion of serine and glycine with tetrahydrofolate (THF) serving as the one-carbon carrier. This reaction serves as the major source of one-carbon groups required for the biosynthesis of purines, thymidylate, methionine, and other important biomolecules. Also exhibits THF-independent aldolase activity toward beta-hydroxyamino acids, producing glycine and aldehydes, via a retro-aldol mechanism. This Koribacter versatilis (strain Ellin345) protein is Serine hydroxymethyltransferase.